The chain runs to 206 residues: Small ribosomal subunit protein uS4 (206 aa).

One can recognise an S4 RNA-binding domain in the interval 96–158 (GRLDNVVYRM…AKQQTRIKAA (63 aa)).

This sequence belongs to the universal ribosomal protein uS4 family. Part of the 30S ribosomal subunit. Contacts protein S5. The interaction surface between S4 and S5 is involved in control of translational fidelity.

In terms of biological role, one of the primary rRNA binding proteins, it binds directly to 16S rRNA where it nucleates assembly of the body of the 30S subunit. Its function is as follows. With S5 and S12 plays an important role in translational accuracy. This chain is Small ribosomal subunit protein uS4, found in Vibrio vulnificus (strain CMCP6).